Here is a 310-residue protein sequence, read N- to C-terminus: Methionyl-tRNA formyltransferase (310 aa).

109-112 (SLLP) contributes to the (6S)-5,6,7,8-tetrahydrofolate binding site.

Belongs to the Fmt family.

It catalyses the reaction L-methionyl-tRNA(fMet) + (6R)-10-formyltetrahydrofolate = N-formyl-L-methionyl-tRNA(fMet) + (6S)-5,6,7,8-tetrahydrofolate + H(+). Attaches a formyl group to the free amino group of methionyl-tRNA(fMet). The formyl group appears to play a dual role in the initiator identity of N-formylmethionyl-tRNA by promoting its recognition by IF2 and preventing the misappropriation of this tRNA by the elongation apparatus. In Parvibaculum lavamentivorans (strain DS-1 / DSM 13023 / NCIMB 13966), this protein is Methionyl-tRNA formyltransferase.